A 185-amino-acid chain; its full sequence is Transcription termination/antitermination protein NusG (185 aa).

Residues V134–V164 enclose the KOW domain.

Belongs to the NusG family.

Functionally, participates in transcription elongation, termination and antitermination. This chain is Transcription termination/antitermination protein NusG, found in Lactococcus lactis subsp. lactis (strain IL1403) (Streptococcus lactis).